The primary structure comprises 163 residues: 6,7-dimethyl-8-ribityllumazine synthase (163 aa).

Residues Phe-27, 58–60 (ALE), and 87–89 (CVV) each bind 5-amino-6-(D-ribitylamino)uracil. A (2S)-2-hydroxy-3-oxobutyl phosphate-binding site is contributed by 92–93 (DT). The active-site Proton donor is the His-95. Asn-120 is a 5-amino-6-(D-ribitylamino)uracil binding site. Arg-134 provides a ligand contact to (2S)-2-hydroxy-3-oxobutyl phosphate.

The protein belongs to the DMRL synthase family.

It catalyses the reaction (2S)-2-hydroxy-3-oxobutyl phosphate + 5-amino-6-(D-ribitylamino)uracil = 6,7-dimethyl-8-(1-D-ribityl)lumazine + phosphate + 2 H2O + H(+). Its pathway is cofactor biosynthesis; riboflavin biosynthesis; riboflavin from 2-hydroxy-3-oxobutyl phosphate and 5-amino-6-(D-ribitylamino)uracil: step 1/2. Functionally, catalyzes the formation of 6,7-dimethyl-8-ribityllumazine by condensation of 5-amino-6-(D-ribitylamino)uracil with 3,4-dihydroxy-2-butanone 4-phosphate. This is the penultimate step in the biosynthesis of riboflavin. This chain is 6,7-dimethyl-8-ribityllumazine synthase, found in Rhodopseudomonas palustris (strain BisA53).